The following is a 449-amino-acid chain: MFS-type transporter hasB (449 aa).

The next 12 helical transmembrane spans lie at 44–64, 80–100, 112–132, 135–155, 168–188, 195–215, 255–275, 296–316, 322–342, 346–366, 387–407, and 415–435; these read VAGS…CGIF, ALAW…PAVG, LPPF…CTKY, VMLA…LPAM, LAVG…PCML, VGFA…LFIA, LPWG…FAPL, AIAN…SDII, MCIV…PLEF, LAGI…FVSL, GGFC…EGAI, and FTGL…CTGT.

The protein belongs to the major facilitator superfamily. Monocarboxylate porter (TC 2.A.1.13) family.

It localises to the membrane. Functionally, MFS-type transporter; part of the gene cluster that mediates the biosynthesis of hexadehydro-astechrome (HAS), a tryptophan-derived iron(III)-complex that acts as a virulence factor in infected mice. Required for the production of HAS. This is MFS-type transporter hasB from Aspergillus fumigatus (strain CBS 144.89 / FGSC A1163 / CEA10) (Neosartorya fumigata).